A 307-amino-acid polypeptide reads, in one-letter code: Protein YIF1A (307 aa).

Positions 1-42 are disordered; it reads MNFQQQGYRATKPRARASPPTGGPMLFDDTSSGPPPMNNQNY. Over 1–148 the chain is Cytoplasmic; sequence MNFQQQGYRA…TPRHDVNAPD (148 aa). Residues 149–169 form a helical membrane-spanning segment; sequence LYIPTMAFITYILLAGMALGI. Topologically, residues 170–184 are lumenal; it reads QKRFSPEVLGLCAST. The helical transmembrane segment at 185–205 threads the bilayer; the sequence is ALVWMIIEVLVMLLSLYLLTV. The Cytoplasmic segment spans residues 206–213; sequence HTDLSTFD. The chain crosses the membrane as a helical span at residues 214-236; sequence LVAYSGYKYVGMILTVFCGLLFG. Residues 237-239 are Lumenal-facing; sequence SDG. Residues 240 to 259 traverse the membrane as a helical segment; sequence YYVALAWSSCALMFFIVRSL. The Cytoplasmic portion of the chain corresponds to 260 to 285; sequence KMKILSSISADSMGAGASAKPRFRLY. Residues 286 to 306 traverse the membrane as a helical segment; the sequence is ITVASAAFQPFIIYWLTAHLV.

The protein belongs to the YIF1 family.

Its subcellular location is the endoplasmic reticulum membrane. The protein resides in the golgi apparatus membrane. The protein localises to the endoplasmic reticulum-Golgi intermediate compartment membrane. Functionally, possible role in transport between endoplasmic reticulum and Golgi. This chain is Protein YIF1A (yif1a), found in Danio rerio (Zebrafish).